The chain runs to 281 residues: Pantothenate synthetase (281 aa).

30 to 37 (MGYLHEGH) lines the ATP pocket. Residue His37 is the Proton donor of the active site. Position 61 (Gln61) interacts with (R)-pantoate. Residue Gln61 coordinates beta-alanine. 147 to 150 (GQKD) contributes to the ATP binding site. Gln153 is a (R)-pantoate binding site. Residues Val176 and 184–187 (MSSR) each bind ATP.

The protein belongs to the pantothenate synthetase family. As to quaternary structure, homodimer.

It is found in the cytoplasm. It carries out the reaction (R)-pantoate + beta-alanine + ATP = (R)-pantothenate + AMP + diphosphate + H(+). It participates in cofactor biosynthesis; (R)-pantothenate biosynthesis; (R)-pantothenate from (R)-pantoate and beta-alanine: step 1/1. Functionally, catalyzes the condensation of pantoate with beta-alanine in an ATP-dependent reaction via a pantoyl-adenylate intermediate. The chain is Pantothenate synthetase from Heliobacterium modesticaldum (strain ATCC 51547 / Ice1).